The chain runs to 103 residues: MTASSLRTLRNILRELRRASPSTGPVREVFGYKFLLDEYRKTRNADEETVKTYQRDASYYLCLLKNERVKKELHEVYKGTGERPVEEVARMVGFKLPKTYDSS.

The protein belongs to the FMC1 family.

The protein is Protein FMC1 homolog of Nematostella vectensis (Starlet sea anemone).